The chain runs to 240 residues: 5-oxoprolinase subunit B (240 aa).

Residue 194-201 (GWQLIGKT) participates in ATP binding.

The protein belongs to the PxpB family. Forms a complex composed of PxpA, PxpB and PxpC. Interacts with PxpC (KipA). Interaction with PxpC prevents the inhibitory action of PxpB (KipI). Interacts with KinA. Two PxpB monomers bind via their C-domains at a conserved proline in the KinA dimerization and histidine-phosphotransfer (DHp) domain.

It carries out the reaction 5-oxo-L-proline + ATP + 2 H2O = L-glutamate + ADP + phosphate + H(+). Its function is as follows. Catalyzes the cleavage of 5-oxoproline to form L-glutamate coupled to the hydrolysis of ATP to ADP and inorganic phosphate. In addition, is a potent inhibitor of the autophosphorylation reaction of kinase A (kinA) and its reverse reaction, but does not inhibit phosphate transfer to the Spo0F response regulator once kinase A is phosphorylated. Is an inhibitor of the catalytic domain of kinase A affecting the ATP/ADP reactions and not the phosphotransferase functions of this domain. The inhibition is non-competitive with respect to ATP. The polypeptide is 5-oxoprolinase subunit B (Bacillus subtilis (strain 168)).